Reading from the N-terminus, the 189-residue chain is Dual specificity phosphatase 21 (189 aa).

The 142-residue stretch at 20–161 (GLSQITASLF…LIHYEFKLFS (142 aa)) folds into the Tyrosine-protein phosphatase domain. The tract at residues 43–128 (SNNHITTIIN…YLMKYHNMTL (86 aa)) is sufficient for mitochondrial localization. The Phosphocysteine intermediate role is filled by Cys105.

Belongs to the protein-tyrosine phosphatase family. Non-receptor class dual specificity subfamily. Microtubule inner protein component of sperm flagellar doublet microtubules. Selectively expressed in testis.

The protein localises to the cytoplasm. It is found in the nucleus. The protein resides in the mitochondrion inner membrane. It localises to the cytoskeleton. Its subcellular location is the flagellum axoneme. It catalyses the reaction O-phospho-L-tyrosyl-[protein] + H2O = L-tyrosyl-[protein] + phosphate. The catalysed reaction is O-phospho-L-seryl-[protein] + H2O = L-seryl-[protein] + phosphate. The enzyme catalyses O-phospho-L-threonyl-[protein] + H2O = L-threonyl-[protein] + phosphate. Its function is as follows. Protein phosphatase component of the sperm flagellar doublet microtubules. May act as a regulator of sperm motility by mediating dephosphorylation of sperm doublet microtubule proteins. Can dephosphorylate single and diphosphorylated synthetic MAPK peptides, with preference for the phosphotyrosine and diphosphorylated forms over phosphothreonine. In Mus musculus (Mouse), this protein is Dual specificity phosphatase 21.